The sequence spans 656 residues: Macrolide export ATP-binding/permease protein MacB (656 aa).

The ABC transporter domain maps to 6–244 (LEVSACYRSF…VKAQVDMSLA (239 aa)). Position 42–49 (42–49 (GASGSGKS)) interacts with ATP. 4 consecutive transmembrane segments (helical) span residues 277–297 (FLTM…VALG), 531–551 (LLIS…VMNI), 586–606 (LVCL…GVVF), and 621–641 (SIVA…FLPA).

The protein belongs to the ABC transporter superfamily. Macrolide exporter (TC 3.A.1.122) family. As to quaternary structure, homodimer. Part of the tripartite efflux system MacAB-TolC, which is composed of an inner membrane transporter, MacB, a periplasmic membrane fusion protein, MacA, and an outer membrane component, TolC. The complex forms a large protein conduit and can translocate molecules across both the inner and outer membranes. Interacts with MacA.

It is found in the cell inner membrane. Its function is as follows. Part of the tripartite efflux system MacAB-TolC. MacB is a non-canonical ABC transporter that contains transmembrane domains (TMD), which form a pore in the inner membrane, and an ATP-binding domain (NBD), which is responsible for energy generation. Confers resistance against macrolides. The chain is Macrolide export ATP-binding/permease protein MacB from Shewanella oneidensis (strain ATCC 700550 / JCM 31522 / CIP 106686 / LMG 19005 / NCIMB 14063 / MR-1).